Here is a 307-residue protein sequence, read N- to C-terminus: Ribonuclease Z (307 aa).

7 residues coordinate Zn(2+): His-63, His-65, Asp-67, His-68, His-141, Asp-212, and His-270. The active-site Proton acceptor is the Asp-67.

Belongs to the RNase Z family. As to quaternary structure, homodimer. Requires Zn(2+) as cofactor.

It carries out the reaction Endonucleolytic cleavage of RNA, removing extra 3' nucleotides from tRNA precursor, generating 3' termini of tRNAs. A 3'-hydroxy group is left at the tRNA terminus and a 5'-phosphoryl group is left at the trailer molecule.. In terms of biological role, zinc phosphodiesterase, which displays some tRNA 3'-processing endonuclease activity. Probably involved in tRNA maturation, by removing a 3'-trailer from precursor tRNA. The protein is Ribonuclease Z of Bacillus anthracis (strain A0248).